We begin with the raw amino-acid sequence, 386 residues long: Threonine--tRNA ligase editing subunit (386 aa).

Belongs to the class-II aminoacyl-tRNA synthetase family. Archaea-specific ThrRS editing domain subfamily. As to quaternary structure, probably interacts with its catalytic subunit (AC Q97VW8); a subunit fusion (in the order edit-catalytic) is fully functional.

Its subcellular location is the cytoplasm. Freestanding tRNA editing subunit of threonine--tRNA ligase, the catalytic subunit is AC Q97VW8. Deacylates (edits) mischarged L-seryl-tRNA(Thr) in trans, removing L-serine, has no aminoacylation activity. In vitro when both subunits are present, or if the 2 subunits are fused, L-seryl-tRNA(Thr) is no longer produced. Has no activity on correctly acylated L-seryl-tRNA(Ser) or L-threonyl-tRNA(Thr). Editing is probably catalyzed by the 2'-OH of A76 of tRNA(Thr). This chain is Threonine--tRNA ligase editing subunit, found in Saccharolobus solfataricus (strain ATCC 35092 / DSM 1617 / JCM 11322 / P2) (Sulfolobus solfataricus).